Here is a 166-residue protein sequence, read N- to C-terminus: Protein-export protein SecB (166 aa).

It belongs to the SecB family. Homotetramer, a dimer of dimers. One homotetramer interacts with 1 SecA dimer.

Its subcellular location is the cytoplasm. In terms of biological role, one of the proteins required for the normal export of preproteins out of the cell cytoplasm. It is a molecular chaperone that binds to a subset of precursor proteins, maintaining them in a translocation-competent state. It also specifically binds to its receptor SecA. The protein is Protein-export protein SecB of Cereibacter sphaeroides (strain ATCC 17029 / ATH 2.4.9) (Rhodobacter sphaeroides).